We begin with the raw amino-acid sequence, 652 residues long: DNA ligase (652 aa).

NAD(+) contacts are provided by residues 29–33, 78–79, and Glu107; these read DSEYD and SL. Lys109 (N6-AMP-lysine intermediate) is an active-site residue. Arg130, Glu164, Lys278, and Lys302 together coordinate NAD(+). Zn(2+) contacts are provided by Cys395, Cys398, Cys413, and Cys418. The BRCT domain maps to 577 to 652; that stretch reads VADAALSGLT…VRDEAWLESL (76 aa).

It belongs to the NAD-dependent DNA ligase family. LigA subfamily. Mg(2+) is required as a cofactor. Mn(2+) serves as cofactor.

The catalysed reaction is NAD(+) + (deoxyribonucleotide)n-3'-hydroxyl + 5'-phospho-(deoxyribonucleotide)m = (deoxyribonucleotide)n+m + AMP + beta-nicotinamide D-nucleotide.. Its function is as follows. DNA ligase that catalyzes the formation of phosphodiester linkages between 5'-phosphoryl and 3'-hydroxyl groups in double-stranded DNA using NAD as a coenzyme and as the energy source for the reaction. It is essential for DNA replication and repair of damaged DNA. The sequence is that of DNA ligase from Streptococcus pneumoniae (strain JJA).